Here is a 521-residue protein sequence, read N- to C-terminus: Vang-like protein 2 (521 aa).

The interval 1–81 (MDTESQYSGY…TTVVTGTSEH (81 aa)) is disordered. Residues 1–108 (MDTESQYSGY…VPLDCSRHLG (108 aa)) lie on the Cytoplasmic side of the membrane. The segment covering 15–33 (GHSRSSRKHRDRRDRHRSK) has biased composition (basic residues). The span at 57–67 (ESTRGDERDDN) shows a compositional bias: basic and acidic residues. Low complexity predominate over residues 69 to 81 (GETTTVVTGTSEH). Residues 109 to 129 (VAAGAILALLSFLTPLAFLLL) form a helical membrane-spanning segment. At 130 to 147 (PPLLWREELEPCGTACEG) the chain is on the extracellular side. Residues 148–168 (LFISVAFKLLILLLGSWALFF) form a helical membrane-spanning segment. At 169 to 178 (RRPKASLPRV) the chain is on the cytoplasmic side. A helical transmembrane segment spans residues 179-199 (FVLRALLMVLVFLLVISYWLF). The Extracellular portion of the chain corresponds to 200 to 217 (YGVRILDARERSYQGVVQ). Residues 218–238 (FAVSLVDALLFVHYLAVVLLE) traverse the membrane as a helical segment. The Cytoplasmic segment spans residues 239 to 521 (LRQLQPQFTL…VMRLQSETSV (283 aa)).

Belongs to the Vang family. In terms of assembly, homodimer and heterodimer with Vangl1. Interacts through its C-terminal region with the N-terminal half of DVL1, DVL2 and DVL3. The PDZ domain of DVL1, DVL2 and DVL3 is required for the interaction. Variants Glu-255 and Asn-464 impair interaction with the DVL proteins. Also interacts with the PDZ domains of MAGI3, SCRIB/SCRB1 and FZD3. Interacts with PRICKLE3. In terms of tissue distribution, primarily expressed in the brain and epididymis. Not detected in the cochlea of Lp mice.

The protein resides in the cell membrane. Involved in the control of early morphogenesis and patterning of both axial midline structures and the development of neural plate. Plays a role in the regulation of planar cell polarity, particularly in the orientation of stereociliary bundles in the cochlea. Required for polarization and movement of myocardializing cells in the outflow tract and seems to act via RHOA signaling to regulate this process. Required for cell surface localization of FZD3 and FZD6 in the inner ear. The protein is Vang-like protein 2 (Vangl2) of Mus musculus (Mouse).